Reading from the N-terminus, the 634-residue chain is Threonine--tRNA ligase (634 aa).

Positions 1–61 constitute a TGS domain; that stretch reads MISLKFPNNE…SESGEFRLYT (61 aa). The interval 242–532 is catalytic; that stretch reads DHRKIGQELD…LIEHYAGAFP (291 aa). The Zn(2+) site is built by cysteine 333, histidine 384, and histidine 509.

Belongs to the class-II aminoacyl-tRNA synthetase family. As to quaternary structure, homodimer. The cofactor is Zn(2+).

The protein resides in the cytoplasm. The enzyme catalyses tRNA(Thr) + L-threonine + ATP = L-threonyl-tRNA(Thr) + AMP + diphosphate + H(+). In terms of biological role, catalyzes the attachment of threonine to tRNA(Thr) in a two-step reaction: L-threonine is first activated by ATP to form Thr-AMP and then transferred to the acceptor end of tRNA(Thr). Also edits incorrectly charged L-seryl-tRNA(Thr). This Carboxydothermus hydrogenoformans (strain ATCC BAA-161 / DSM 6008 / Z-2901) protein is Threonine--tRNA ligase.